A 446-amino-acid polypeptide reads, in one-letter code: UDP-N-acetylmuramoylalanine--D-glutamate ligase (446 aa).

ATP is bound at residue 115–121 (GSNGKST).

Belongs to the MurCDEF family.

It localises to the cytoplasm. The enzyme catalyses UDP-N-acetyl-alpha-D-muramoyl-L-alanine + D-glutamate + ATP = UDP-N-acetyl-alpha-D-muramoyl-L-alanyl-D-glutamate + ADP + phosphate + H(+). It functions in the pathway cell wall biogenesis; peptidoglycan biosynthesis. Cell wall formation. Catalyzes the addition of glutamate to the nucleotide precursor UDP-N-acetylmuramoyl-L-alanine (UMA). The polypeptide is UDP-N-acetylmuramoylalanine--D-glutamate ligase (Hahella chejuensis (strain KCTC 2396)).